The primary structure comprises 159 residues: Ornithine decarboxylase antizyme (159 aa).

It belongs to the ODC antizyme family. As to quaternary structure, interacts with ODC1 and thereby sterically blocks ODC homodimerization.

Its function is as follows. Ornithine decarboxylase (ODC) antizyme protein that negatively regulates ODC activity and intracellular polyamine biosynthesis and uptake in response to increased intracellular polyamine levels. Binds to ODC monomers, inhibiting the assembly of the functional ODC homodimer, and targets the monomers for ubiquitin-independent proteolytic destruction by the 26S proteasome. The chain is Ornithine decarboxylase antizyme from Caenorhabditis elegans.